Reading from the N-terminus, the 406-residue chain is Erythromycin esterase type I (406 aa).

This enzyme confers resistance to erythromycin through inactivation by hydrolyzing the lactone ring of the antibiotic. This is Erythromycin esterase type I (ereA) from Escherichia coli.